The chain runs to 255 residues: Ribonuclease HII (255 aa).

Residues 70 to 255 (ELIAGVDEVG…FEPIKSIIKK (186 aa)) form the RNase H type-2 domain. The a divalent metal cation site is built by aspartate 76, glutamate 77, and aspartate 168.

The protein belongs to the RNase HII family. The cofactor is Mn(2+). It depends on Mg(2+) as a cofactor.

It localises to the cytoplasm. It catalyses the reaction Endonucleolytic cleavage to 5'-phosphomonoester.. In terms of biological role, endonuclease that specifically degrades the RNA of RNA-DNA hybrids. This Streptococcus thermophilus (strain ATCC BAA-491 / LMD-9) protein is Ribonuclease HII.